A 107-amino-acid polypeptide reads, in one-letter code: DNA polymerase delta subunit 4 (107 aa).

The short motif at Met-1–Arg-16 is the PCNA-interaction protein motif (PIP box) element. The disordered stretch occupies residues Met-1 to Glu-35. The span at Lys-15–Leu-28 shows a compositional bias: basic and acidic residues.

The protein belongs to the DNA polymerase delta subunit 4 family. In terms of assembly, component of the tetrameric DNA polymerase delta complex (Pol-delta4), which consists of POLD1/p125, POLD2/p50, POLD3/p66/p68 and POLD4/p12, with POLD1 bearing DNA polymerase and 3' to 5' proofreading exonuclease activities. Within this complex, directly interacts with POLD1 and POLD2. Directly interacts with PCNA, as do POLD1 and POLD3; this interaction stimulates Pol-delta4 polymerase activity. As POLD1 and POLD2, directly interacts with WRNIP1; this interaction stimulates DNA polymerase delta-mediated DNA synthesis, independently of the presence of PCNA, possibly by increasing initiation frequency. Upon genotoxic stress induced by DNA damaging agents or by replication stress, POLD4 is proteolytically degraded and Pol-delta4 is converted into a trimeric form of the complex (Pol-delta3) that has an increased proofreading activity. The DNA polymerase delta complex interacts with POLDIP2; this interaction is probably mediated through direct binding to POLD2. Ubiquitinated; undergoes 'Lys-48'-linked ubiquitination in response to UV irradiation, leading to proteasomal degradation. This modification is partly mediated by RNF8 and by the DCX(DTL) E3 ubiquitin ligase complex (also called CRL4(CDT2)). Efficient degradation requires the presence of PCNA and is required for the inhibition of fork progression after DNA damage.

Its subcellular location is the nucleus. As a component of the tetrameric DNA polymerase delta 4 complex (Pol-delta4), plays a role in high fidelity genome replication and repair. Within this complex, increases the rate of DNA synthesis and decreases fidelity by regulating POLD1 polymerase and proofreading 3' to 5' exonuclease activity. Pol-delta4 participates in Okazaki fragment processing, through both the short flap pathway, as well as a nick translation system. Under conditions of DNA replication stress, required for the repair of broken replication forks through break-induced replication (BIR), a mechanism that may induce segmental genomic duplications of up to 200 kb. Involved in Pol-delta4 translesion synthesis (TLS) of templates carrying O6-methylguanine or abasic sites. Its degradation in response to DNA damage is required for the inhibition of fork progression and cell survival. In Bos taurus (Bovine), this protein is DNA polymerase delta subunit 4 (POLD4).